The sequence spans 191 residues: Photosystem I assembly protein Ycf4 (191 aa).

2 helical membrane passes run 34-54 (VASM…SSYF) and 68-88 (IFVP…LLAI).

The protein belongs to the Ycf4 family.

The protein resides in the cellular thylakoid membrane. Functionally, seems to be required for the assembly of the photosystem I complex. The protein is Photosystem I assembly protein Ycf4 of Prochlorococcus marinus (strain NATL2A).